Reading from the N-terminus, the 139-residue chain is Large ribosomal subunit protein uL16 (139 aa).

It belongs to the universal ribosomal protein uL16 family. As to quaternary structure, part of the 50S ribosomal subunit.

In terms of biological role, binds 23S rRNA and is also seen to make contacts with the A and possibly P site tRNAs. The chain is Large ribosomal subunit protein uL16 from Prosthecochloris aestuarii (strain DSM 271 / SK 413).